Here is a 403-residue protein sequence, read N- to C-terminus: S-adenosylmethionine synthase (403 aa).

Residue H15 coordinates ATP. D17 is a Mg(2+) binding site. E43 is a binding site for K(+). L-methionine-binding residues include E56 and Q99. Residues 99-109 (QSPDINQGVDR) are flexible loop. ATP is bound by residues 166–168 (DAK), 232–233 (KF), D241, 247–248 (RK), A264, and K268. Residue D241 participates in L-methionine binding. K272 contributes to the L-methionine binding site.

This sequence belongs to the AdoMet synthase family. As to quaternary structure, homotetramer; dimer of dimers. Requires Mg(2+) as cofactor. It depends on K(+) as a cofactor.

Its subcellular location is the cytoplasm. It catalyses the reaction L-methionine + ATP + H2O = S-adenosyl-L-methionine + phosphate + diphosphate. Its pathway is amino-acid biosynthesis; S-adenosyl-L-methionine biosynthesis; S-adenosyl-L-methionine from L-methionine: step 1/1. Catalyzes the formation of S-adenosylmethionine (AdoMet) from methionine and ATP. The overall synthetic reaction is composed of two sequential steps, AdoMet formation and the subsequent tripolyphosphate hydrolysis which occurs prior to release of AdoMet from the enzyme. This Xanthomonas campestris pv. campestris (strain ATCC 33913 / DSM 3586 / NCPPB 528 / LMG 568 / P 25) protein is S-adenosylmethionine synthase.